The primary structure comprises 748 residues: Phosphoenolpyruvate-dependent phosphotransferase system (748 aa).

A GAF domain is found at 1–127 (MLTRLREIVE…RRQLLGVLVV (127 aa)). The linker stretch occupies residues 128-170 (QQRELRQYDESEESFLVTLATQMAAILSQSQVTALFGQYRQTR). A PTS EI region spans residues 171–748 (IRALPAAPGV…GMGGLIRGGL (578 aa)). H356 serves as the catalytic Tele-phosphohistidine intermediate. Phosphoenolpyruvate is bound by residues R462 and R498. 2 residues coordinate Mg(2+): E597 and D621. Phosphoenolpyruvate is bound by residues 620–621 (ND) and R631. The active-site Proton donor is C668.

This sequence belongs to the PEP-utilizing enzyme family. Requires Mg(2+) as cofactor.

The protein resides in the cytoplasm. The catalysed reaction is L-histidyl-[protein] + phosphoenolpyruvate = N(pros)-phospho-L-histidyl-[protein] + pyruvate. In terms of biological role, component of the phosphoenolpyruvate-dependent nitrogen-metabolic phosphotransferase system (nitrogen-metabolic PTS), that seems to be involved in regulating nitrogen metabolism. Enzyme I-Ntr transfers the phosphoryl group from phosphoenolpyruvate (PEP) to the phosphoryl carrier protein (NPr). Could function in the transcriptional regulation of sigma-54 dependent operons in conjunction with the NPr (PtsO) and EIIA-Ntr (PtsN) proteins. Enzyme I-Ntr is specific for NPr. This is Phosphoenolpyruvate-dependent phosphotransferase system (ptsP) from Salmonella typhimurium (strain LT2 / SGSC1412 / ATCC 700720).